The following is a 554-amino-acid chain: Hydroxylamine reductase (554 aa).

[2Fe-2S] cluster contacts are provided by Cys-3, Cys-6, Cys-18, and Cys-25. Residues His-252, Glu-276, Cys-320, Cys-408, Cys-436, Cys-461, Glu-495, and Lys-497 each contribute to the hybrid [4Fe-2O-2S] cluster site. Cys-408 is subject to Cysteine persulfide.

Belongs to the HCP family. The cofactor is [2Fe-2S] cluster. Hybrid [4Fe-2O-2S] cluster is required as a cofactor.

It localises to the cytoplasm. It catalyses the reaction A + NH4(+) + H2O = hydroxylamine + AH2 + H(+). Catalyzes the reduction of hydroxylamine to form NH(3) and H(2)O. The sequence is that of Hydroxylamine reductase from Shewanella baltica (strain OS155 / ATCC BAA-1091).